The sequence spans 319 residues: Taste receptor type 2 member 39 (319 aa).

Residues 1–16 (MAQPSNYWKQDVLPLS) lie on the Extracellular side of the membrane. The chain crosses the membrane as a helical span at residues 17–37 (ILMLTLVATECTIGIIASGIV). Residues 38–65 (MAVNAVSWVQKKAISITTRILLLLSVSR) lie on the Cytoplasmic side of the membrane. Residues 66–86 (IGLQSIMLIEITSSIFNVAFY) form a helical membrane-spanning segment. Residues 87-97 (NSVLYRVSNVS) lie on the Extracellular side of the membrane. N-linked (GlcNAc...) asparagine glycosylation occurs at Asn-95. Residues 98-118 (FVFLNYCSLWFAALLSFFHFV) traverse the membrane as a helical segment. Residues 119 to 137 (KIANFSYPLFFKLKWRISE) lie on the Cytoplasmic side of the membrane. A helical membrane pass occupies residues 138–158 (LMPWLLWLSVFISFSSSMFFS). The Extracellular portion of the chain corresponds to 159 to 194 (KHKFTVNNNNSLSNNICNFTMKLYVVETNVVNVSFL). 3 N-linked (GlcNAc...) asparagine glycosylation sites follow: Asn-167, Asn-176, and Asn-190. A helical transmembrane segment spans residues 195 to 215 (FISGILPPLTMFVATATLLIF). Over 216 to 247 (SLRRHTLNMRNSATGSRNPCIEAHMQAIKETS) the chain is Cytoplasmic. Residues 248 to 268 (CFLFLYILNAAALLLSTSNIV) form a helical membrane-spanning segment. Over 269–273 (DASLF) the chain is Extracellular. A helical transmembrane segment spans residues 274–294 (WSIVIRIVLPVYPAGHSVLLI). The Cytoplasmic segment spans residues 295-319 (QNNPGLRRTWKHLQSQIHLYLQNRF).

It belongs to the G-protein coupled receptor T2R family.

Its subcellular location is the membrane. Putative taste receptor which may play a role in the perception of bitterness. The polypeptide is Taste receptor type 2 member 39 (Tas2r39) (Mus musculus (Mouse)).